A 153-amino-acid chain; its full sequence is Calmodulin-like protein 4 (153 aa).

4 EF-hand domains span residues 8–43, 44–79, 81–116, and 117–152; these read DQINEYKECFSLYDKQQRGKIKATDLLVSMRCLGAS, PTPGEVQRHLQTHGIDKNGELDFSTFLTIMHMQIKQ, DPKKEILLAMLMADKEKKGYIMASELRSKLMKLGEK, and LTHKEVDDLFKEAGIEPNGQVKYDTFIQRITIPVRD.

The protein belongs to the calmodulin family. In terms of assembly, interacts with MYO7B; the interaction mediates the association of CALML4 with the IMAC/intermicrovillar adhesion complex. Interacts with MYO7A. Expressed in the small intestine, in both mature enterocytes on the villus surface and immature cells that reside in the crypt stem-cell niche.

Its subcellular location is the cell projection. The protein localises to the microvillus. Its function is as follows. As part of the intermicrovillar adhesion complex/IMAC plays a role in epithelial brush border differentiation, controlling microvilli organization and length. Acts as a light chain for MYO7B and is required for efficient targeting of the IMAC to the tips of border brush microvilli. This chain is Calmodulin-like protein 4 (Calml4), found in Mus musculus (Mouse).